The chain runs to 316 residues: MKALWAVLVVTLLAGCLAEGEPELEPEVTDRLAWQSGQPWELALGRFWDYLRWVQTLSDQVQEELQSSQVTQELTVLMEDTMTELKAYKKELEEQLGPMAEETRARLAKEVQAAQSRLGADMEDLRNRLGQYRNEVQTMLGQSTEELRARLSTHLRKLRKRLMRDAEDLQKRLAVYKAGAREGAERGVGAIRERLGPLVEQGRQRTANLGAGAGKPLQDRAQALGARIRGRLEEVGNQARDRLEEVREQMEEVRAKVEEQAQQMRLQAEIFQARLKGWFEPLVEDMQRQWANLVEKIQASVAANPIPPSSVPQESQ.

The N-terminal stretch at 1–18 is a signal peptide; it reads MKALWAVLVVTLLAGCLA. 8 repeat units span residues 76 to 97, 98 to 119, 120 to 141, 142 to 163, 164 to 185, 186 to 207, 208 to 229, and 230 to 251. An 8 X 22 AA approximate tandem repeats region spans residues 76–251; the sequence is VLMEDTMTEL…RLEEVREQME (176 aa). Residue methionine 139 is modified to Methionine sulfoxide. Serine 143 bears the Phosphoserine mark. An LDL and other lipoprotein receptors binding region spans residues 154–164; the sequence is HLRKLRKRLMR. 158-161 serves as a coordination point for heparin; sequence LRKR. The segment at 206-286 is lipid-binding and lipoprotein association; that stretch reads TANLGAGAGK…GWFEPLVEDM (81 aa). 225 to 232 is a heparin binding site; that stretch reads GARIRGRL. Residues 262–316 form a homooligomerization region; sequence QQMRLQAEIFQARLKGWFEPLVEDMQRQWANLVEKIQASVAANPIPPSSVPQESQ. The interval 274-286 is specificity for association with VLDL; the sequence is RLKGWFEPLVEDM.

Belongs to the apolipoprotein A1/A4/E family. Homotetramer. May interact with ABCA1; functionally associated with ABCA1 in the biogenesis of HDLs. May interact with APP/A4 amyloid-beta peptide; the interaction is extremely stable in vitro but its physiological significance is unclear. May interact with MAPT. May interact with MAP2. In the cerebrospinal fluid, interacts with secreted SORL1. Interacts with PMEL; this allows the loading of PMEL luminal fragment on ILVs to induce fibril nucleation. In terms of processing, APOE exists as multiple glycosylated and sialylated glycoforms within cells and in plasma. The extent of glycosylation and sialylation are tissue and context specific. Post-translationally, glycated in plasma VLDL. Phosphorylated by FAM20C in the extracellular medium.

It is found in the secreted. The protein localises to the extracellular space. The protein resides in the extracellular matrix. It localises to the extracellular vesicle. Its subcellular location is the endosome. It is found in the multivesicular body. In terms of biological role, APOE is an apolipoprotein, a protein associating with lipid particles, that mainly functions in lipoprotein-mediated lipid transport between organs via the plasma and interstitial fluids. APOE is a core component of plasma lipoproteins and is involved in their production, conversion and clearance. Apolipoproteins are amphipathic molecules that interact both with lipids of the lipoprotein particle core and the aqueous environment of the plasma. As such, APOE associates with chylomicrons, chylomicron remnants, very low density lipoproteins (VLDL) and intermediate density lipoproteins (IDL) but shows a preferential binding to high-density lipoproteins (HDL). It also binds a wide range of cellular receptors including the LDL receptor/LDLR, the LDL receptor-related proteins LRP1, LRP2 and LRP8 and the very low-density lipoprotein receptor/VLDLR that mediate the cellular uptake of the APOE-containing lipoprotein particles. Finally, APOE also has a heparin-binding activity and binds heparan-sulfate proteoglycans on the surface of cells, a property that supports the capture and the receptor-mediated uptake of APOE-containing lipoproteins by cells. A main function of APOE is to mediate lipoprotein clearance through the uptake of chylomicrons, VLDLs, and HDLs by hepatocytes. APOE is also involved in the biosynthesis by the liver of VLDLs as well as their uptake by peripheral tissues ensuring the delivery of triglycerides and energy storage in muscle, heart and adipose tissues. By participating in the lipoprotein-mediated distribution of lipids among tissues, APOE plays a critical role in plasma and tissues lipid homeostasis. APOE is also involved in two steps of reverse cholesterol transport, the HDLs-mediated transport of cholesterol from peripheral tissues to the liver, and thereby plays an important role in cholesterol homeostasis. First, it is functionally associated with ABCA1 in the biogenesis of HDLs in tissues. Second, it is enriched in circulating HDLs and mediates their uptake by hepatocytes. APOE also plays an important role in lipid transport in the central nervous system, regulating neuron survival and sprouting. In Onychomys torridus (Southern grasshopper mouse), this protein is Apolipoprotein E (Apoe).